A 437-amino-acid chain; its full sequence is Rhoptry apical surface protein 2 (437 aa).

The region spanning 45-179 is the C2 domain; sequence GCLGSLFFYL…PRINLSLHKL (135 aa). Positions 230 to 338 constitute a PH domain; that stretch reads EGPLERLNAN…FIEKLRAYRE (109 aa). A disordered region spans residues 341–437; the sequence is STRVPSQKGA…SVVGDEEPQT (97 aa). Basic residues predominate over residues 375-384; sequence RKSGGKKSRR.

As to quaternary structure, interacts with RASP1. Interacts with RASP3.

Its subcellular location is the cytoplasmic vesicle. The protein localises to the secretory vesicle. The protein resides in the rhoptry membrane. Functionally, essential for tachyzoite invasion of host cells by controlling rhoptry secretion. Binds to phosphatidic acid (PA) and phosphatidylinositol 4,5-bisphosphate (PIP2) lipids and thus, likely contributes to the assembly of the machinery that docks or primes the rhoptry to the parasite cell membrane prior to the fusion with the host cell membrane. This Toxoplasma gondii (strain ATCC 50853 / GT1) protein is Rhoptry apical surface protein 2.